Reading from the N-terminus, the 466-residue chain is GTP cyclohydrolase 1 (466 aa).

Positions 342, 345, and 416 each coordinate Zn(2+).

Belongs to the GTP cyclohydrolase I family. Homodimer.

It carries out the reaction GTP + H2O = 7,8-dihydroneopterin 3'-triphosphate + formate + H(+). The protein operates within cofactor biosynthesis; 7,8-dihydroneopterin triphosphate biosynthesis; 7,8-dihydroneopterin triphosphate from GTP: step 1/1. Its function is as follows. GTP cyclohydrolase 1 is the first enzyme in the biosynthetic pathway leading to folic acid. The sequence is that of GTP cyclohydrolase 1 (GCH1) from Arabidopsis thaliana (Mouse-ear cress).